We begin with the raw amino-acid sequence, 69 residues long: Photosystem I reaction center subunit IV (69 aa).

Belongs to the PsaE family.

The protein localises to the cellular thylakoid membrane. Stabilizes the interaction between PsaC and the PSI core, assists the docking of the ferredoxin to PSI and interacts with ferredoxin-NADP oxidoreductase. This is Photosystem I reaction center subunit IV from Prochlorococcus marinus (strain MIT 9515).